The sequence spans 875 residues: Probable ATP-dependent RNA helicase DDX10 (875 aa).

Positions 1–44 (MGKTVASLGQGTRPDPVRSFNRWKKKHSHRQHQKKERRKQLKKP) are disordered. Residue Thr-4 is modified to Phosphothreonine. Ser-7 carries the post-translational modification Phosphoserine. Over residues 21–41 (NRWKKKHSHRQHQKKERRKQL) the composition is skewed to basic residues. The short motif at 69–97 (TRFSDFPLSKKTLKGLQEAQYRLVTEIQK) is the Q motif element. Residues 89 to 91 (YRL), Gln-96, and 113 to 120 (AKTGSGKT) contribute to the ATP site. A Helicase ATP-binding domain is found at 100–274 (IGLALQGKDV…RLSLKDPEYV (175 aa)). Residues 222 to 225 (DEAD) carry the DEAD box motif. In terms of domain architecture, Helicase C-terminal spans 300–449 (KISVLFSFLR…EIKINPEKLI (150 aa)). A disordered region spans residues 525–612 (LVKNPVTEAV…HTESVVSIEE (88 aa)). A Phosphoserine modification is found at Ser-540. At Lys-556 the chain carries N6-acetyllysine. Residues 562–575 (KSGERLEETEHRLA) are compositionally biased toward basic and acidic residues. Residues 578-593 (DGDEEQDEETEDEETE) are compositionally biased toward acidic residues. Thr-587 carries the post-translational modification Phosphothreonine. Positions 594-604 (DHLGKAREPHT) are enriched in basic and acidic residues. A Glycyl lysine isopeptide (Lys-Gly) (interchain with G-Cter in SUMO2) cross-link involves residue Lys-652. Residues 734-744 (EEDKFDKEEYR) are compositionally biased toward basic and acidic residues. The disordered stretch occupies residues 734-860 (EEDKFDKEEY…VEPLDTGLSL (127 aa)). Over residues 745–754 (KKIKAKHRER) the composition is skewed to basic residues. Positions 755–774 (RLKEREARREANKRQAKARD) are enriched in basic and acidic residues. A compositionally biased stretch (acidic residues) spans 775 to 789 (EEEAFLDWSDEDDGG). Position 783 is a phosphoserine (Ser-783). Positions 797 to 831 (DPDKHRSSEESESEDTNHKMSDTKKKQETRKRNNT) are enriched in basic and acidic residues.

It belongs to the DEAD box helicase family. DDX10/DBP4 subfamily. In terms of assembly, interacts with AIM2; this interaction promotes AIM2 stability. Interacts with SCNA; this interaction causes DDX10 mislocalization to the nucleoplasm and cytoplasmic inclusions.

It is found in the cytoplasm. The protein resides in the nucleus. The protein localises to the nucleolus. It carries out the reaction ATP + H2O = ADP + phosphate + H(+). Its function is as follows. Putative ATP-dependent RNA helicase that plays various role in innate immunity or inflammation. Plays a role in the enhancement of AIM2-induced inflammasome activation by interacting with AIM2 and stabilizing its protein level. Negatively regulates viral infection by promoting interferon beta production and interferon stimulated genes/ISGs expression. This is Probable ATP-dependent RNA helicase DDX10 (Ddx10) from Mus musculus (Mouse).